The primary structure comprises 478 residues: Septin-4 (478 aa).

2 disordered regions span residues 40-74 (DFSG…LYDD) and 87-115 (ADNQ…LDPY). The segment covering 95-108 (APAPLSPSARPRSP) has biased composition (low complexity). 2 positions are modified to phosphoserine: serine 117 and serine 118. Residues 141 to 414 (KGFDFTLMVA…ENYRAQCIQS (274 aa)) form the Septin-type G domain. A G1 motif region spans residues 151-158 (GESGLGKS). GTP-binding positions include 151–158 (GESGLGKS) and threonine 185. Positions 208 to 211 (DTPG) are G3 motif. Residues 289 to 292 (AKAD) form a G4 motif region. 290–298 (KADTLTPPE) is a GTP binding site. Serine 325 is modified (phosphoserine). GTP is bound by residues glycine 348 and arginine 363. The disordered stretch occupies residues 428–448 (LTRESGTDFPIPAVPPGTDPE). A Phosphoserine modification is found at serine 432. Residue threonine 434 is modified to Phosphothreonine. Positions 446–478 (DPETEKLIREKDEELRRMQEILHKIQKQMKETY) form a coiled coil.

Belongs to the TRAFAC class TrmE-Era-EngA-EngB-Septin-like GTPase superfamily. Septin GTPase family. In terms of assembly, septins polymerize into heterooligomeric protein complexes that form filaments, and can associate with cellular membranes, actin filaments and microtubules. GTPase activity is required for filament formation. Interacts with SEPTIN8. Component of a septin core octameric complex consisting of SEPTIN12, SEPTIN7, SEPTIN6 and SEPTIN2 or SEPTIN4 in the order 12-7-6-2-2-6-7-12 or 12-7-6-4-4-6-7-12. Interacts with SEPTIN14 (via C-terminus). Interacts with DYRK1A. Interacts with SLC6A3/DAT and SNCA/alpha-synuclein. Interacts with STX1A; in the striatum. Interacts with XIAP (via BIR3 domain) following the induction of apoptosis. Interacts with AREL1 (via HECT domain); in the cytoplasm following induction of apoptosis. Post-translationally, ubiquitinated by AREL1. Phosphorylated by DYRK1A.

The protein resides in the cytoplasm. The protein localises to the cell projection. Its subcellular location is the cilium. It localises to the flagellum. It is found in the cytoplasmic vesicle. The protein resides in the secretory vesicle. The protein localises to the axon. Its subcellular location is the dendrite. It localises to the perikaryon. It is found in the synapse. Functionally, filament-forming cytoskeletal GTPase. Pro-apoptotic protein involved in LGR5-positive intestinal stem cell and Paneth cell expansion in the intestines, via its interaction with XIAP. May also play a role in the regulation of cell fate in the intestine. Positive regulator of apoptosis involved in hematopoietic stem cell homeostasis; via its interaction with XIAP. Negative regulator of repair and hair follicle regeneration in response to injury, due to inhibition of hair follicle stem cell proliferation, potentially via its interaction with XIAP. Plays an important role in male fertility and sperm motility. During spermiogenesis, essential for the establishment of the annulus (a fibrous ring structure connecting the midpiece and the principal piece of the sperm flagellum) which is a requisite for the structural and mechanical integrity of the sperm. Involved in the migration of cortical neurons and the formation of neuron leading processes during embryonic development. Required for dopaminergic metabolism in presynaptic autoreceptors; potentially via activity as a presynaptic scaffold protein. This Macaca fascicularis (Crab-eating macaque) protein is Septin-4.